A 199-amino-acid polypeptide reads, in one-letter code: Peptidyl-tRNA hydrolase (199 aa).

Tyrosine 15 contacts tRNA. Residue histidine 20 is the Proton acceptor of the active site. 3 residues coordinate tRNA: tyrosine 66, asparagine 68, and asparagine 114.

This sequence belongs to the PTH family. In terms of assembly, monomer.

It localises to the cytoplasm. The catalysed reaction is an N-acyl-L-alpha-aminoacyl-tRNA + H2O = an N-acyl-L-amino acid + a tRNA + H(+). Hydrolyzes ribosome-free peptidyl-tRNAs (with 1 or more amino acids incorporated), which drop off the ribosome during protein synthesis, or as a result of ribosome stalling. Its function is as follows. Catalyzes the release of premature peptidyl moieties from peptidyl-tRNA molecules trapped in stalled 50S ribosomal subunits, and thus maintains levels of free tRNAs and 50S ribosomes. The polypeptide is Peptidyl-tRNA hydrolase (Burkholderia multivorans (strain ATCC 17616 / 249)).